We begin with the raw amino-acid sequence, 58 residues long: Small ribosomal subunit protein bS21 (58 aa).

The protein belongs to the bacterial ribosomal protein bS21 family.

This chain is Small ribosomal subunit protein bS21, found in Lacticaseibacillus paracasei (strain ATCC 334 / BCRC 17002 / CCUG 31169 / CIP 107868 / KCTC 3260 / NRRL B-441) (Lactobacillus paracasei).